The following is a 528-amino-acid chain: DNA damage-binding protein cmr1 (528 aa).

Disordered stretches follow at residues 32–98 (AQSS…QYEA) and 217–243 (DASQEKPTSAVKQEDDEEDAEDDDPDP). A compositionally biased stretch (basic residues) spans 52-62 (KPKKKPPPKKV). Residues 185-226 (LTPERIYTMTFHPSEAKPLIFAGDKMGNLGVLDASQEKPTSA) form a WD 1 repeat. Over residues 230-242 (EDDEEDAEDDDPD) the composition is skewed to acidic residues. WD repeat units lie at residues 250 to 290 (PHTR…SVEK), 297 to 337 (SDDI…RSAV), 342 to 382 (LSEK…HDDP), 389 to 428 (VSRLSVSHAAFNSAGQIATSSYDDTLKIYDFGSKGIAAWE), 451 to 494 (GRWV…LAQL), and 497 to 528 (DGITAVPAVAVFHCSTNWIAGGTASGKICLWM).

Belongs to the WD repeat DDB2/WDR76 family.

In terms of biological role, DNA-binding protein that binds to both single- and double-stranded DNA. Binds preferentially to UV-damaged DNA. May be involved in DNA-metabolic processes. This is DNA damage-binding protein cmr1 from Aspergillus fumigatus (strain CBS 144.89 / FGSC A1163 / CEA10) (Neosartorya fumigata).